Consider the following 92-residue polypeptide: MQVSTAALAVLLCTVALCNRISATFAADTPTSCCFSYISRQIPQNFIADYFETNSQCSKPGVIFLTKRGRQVCADPSKEWVQKYVSDLELSA.

Residues 1–26 (MQVSTAALAVLLCTVALCNRISATFA) form the signal peptide. Intrachain disulfides connect cysteine 33–cysteine 57 and cysteine 34–cysteine 73.

The protein belongs to the intercrine beta (chemokine CC) family. Self-associates. Also heterodimer of MIP-1-alpha(4-69) and MIP-1-beta(3-69). Interacts with CCR1.

It localises to the secreted. Monokine with inflammatory and chemokinetic properties. Binds to CCR1, CCR4 and CCR5. One of the major HIV-suppressive factors produced by CD8+ T-cells. Recombinant MIP-1-alpha induces a dose-dependent inhibition of different strains of HIV-1, HIV-2, and simian immunodeficiency virus (SIV). The sequence is that of C-C motif chemokine 3 (CCL3) from Macaca mulatta (Rhesus macaque).